We begin with the raw amino-acid sequence, 70 residues long: Small ribosomal subunit protein bS21B (70 aa).

The disordered stretch occupies residues 37–70 (SYEKPTTERKRKKAAAVARLRKQVRRSMPPKKKY). Over residues 45–70 (RKRKKAAAVARLRKQVRRSMPPKKKY) the composition is skewed to basic residues.

This sequence belongs to the bacterial ribosomal protein bS21 family.

This chain is Small ribosomal subunit protein bS21B, found in Burkholderia pseudomallei (strain K96243).